A 335-amino-acid polypeptide reads, in one-letter code: Transaldolase (335 aa).

Catalysis depends on Lys135, which acts as the Schiff-base intermediate with substrate.

Belongs to the transaldolase family. Type 1 subfamily. Homodimer.

It localises to the cytoplasm. The catalysed reaction is D-sedoheptulose 7-phosphate + D-glyceraldehyde 3-phosphate = D-erythrose 4-phosphate + beta-D-fructose 6-phosphate. Its pathway is carbohydrate degradation; pentose phosphate pathway; D-glyceraldehyde 3-phosphate and beta-D-fructose 6-phosphate from D-ribose 5-phosphate and D-xylulose 5-phosphate (non-oxidative stage): step 2/3. In terms of biological role, transaldolase is important for the balance of metabolites in the pentose-phosphate pathway. This chain is Transaldolase, found in Prochlorococcus marinus (strain SARG / CCMP1375 / SS120).